Consider the following 804-residue polypeptide: Leucine--tRNA ligase (804 aa).

The short motif at 40 to 51 (PYPSGAGLHVGH) is the 'HIGH' region element. Residues 576 to 580 (KMSKS) carry the 'KMSKS' region motif. Lys-579 is a binding site for ATP.

This sequence belongs to the class-I aminoacyl-tRNA synthetase family.

The protein localises to the cytoplasm. The enzyme catalyses tRNA(Leu) + L-leucine + ATP = L-leucyl-tRNA(Leu) + AMP + diphosphate. This chain is Leucine--tRNA ligase, found in Staphylococcus aureus (strain MRSA252).